The primary structure comprises 493 residues: F(420)H(2) dehydrogenase subunit N (493 aa).

A run of 14 helical transmembrane segments spans residues 7-27 (LAPELVLVATGLVILLTGVFL), 34-54 (ILGYLATLGTLAAIFLTVKSF), 78-98 (LSQFFKLVFLAVALIVSIASI), 107-127 (TEEFYTLVLFATFGMMIVASA), 130-150 (LILLFCAFELASLATFALAGF), 165-185 (FVIGSVSAALMLFGLSFVYGA), 205-225 (PIGIVAIVLLTAGFGFKMALV), 244-264 (ALLAAGSKKMGFVAAFRVFII), 273-293 (WQFMFTLLAVVTMTFGNVVAV), 310-330 (AGYIAMAFAVMTPVALAGGIM), 333-353 (LAHAFMKAGAFIAAAAVVWMI), 381-401 (ALCMTVFVFALAGIPPTAGFM), 404-424 (FVLFSSTIQAGMTWLAVIAIL), and 454-474 (IPFPYAAALLVAVAGVLVMGL).

This sequence belongs to the complex I subunit 2 family. The FPO complex is composed of at least 13 different subunits. FpoA, FpoH, FpoJ, FpoK, FpoL, FpoM and FpoN proteins constitute the membrane sector of the complex.

It localises to the cell membrane. The enzyme catalyses methanophenazine + reduced coenzyme F420-(gamma-L-Glu)(n) = dihydromethanophenazine + oxidized coenzyme F420-(gamma-L-Glu)(n) + H(+). Its function is as follows. Component of the F(420)H(2) dehydrogenase (FPO complex) which is part of the energy-conserving F(420)H(2):heterodisulfide oxidoreductase system. The membrane-bound electron transfer system of the complex plays an important role in the metabolism of methylotrophic methanogens when the organisms grow on methanol or methylamines. Catalyzes the oxidation of methanophenazine to dihydromethanophenazine. It shuttles electrons from F(420)H(2), via FAD and iron-sulfur (Fe-S) centers, to methanophenazine (an electron carrier in the membrane). It couples the redox reaction to proton translocation (for every two electrons transferred, two hydrogen ions are translocated across the cytoplasmic membrane), and thus conserves the redox energy in a proton gradient. It also catalyzes the oxidation of F(420)H(2) with quinones such as 2,3-dimethyl-1,4-naphthoquinone, 2-methyl-1,4-naphthoquinone and tetramethyl-p-benzoquinone. This chain is F(420)H(2) dehydrogenase subunit N (fpoN), found in Methanosarcina mazei (strain ATCC BAA-159 / DSM 3647 / Goe1 / Go1 / JCM 11833 / OCM 88) (Methanosarcina frisia).